A 282-amino-acid chain; its full sequence is tRNA uridine(34) hydroxylase (282 aa).

The Rhodanese domain occupies 128–222 (EGRPVVMLDT…YFEEVGGDHY (95 aa)). Cys-182 acts as the Cysteine persulfide intermediate in catalysis.

The protein belongs to the TrhO family.

The enzyme catalyses uridine(34) in tRNA + AH2 + O2 = 5-hydroxyuridine(34) in tRNA + A + H2O. Its function is as follows. Catalyzes oxygen-dependent 5-hydroxyuridine (ho5U) modification at position 34 in tRNAs. This chain is tRNA uridine(34) hydroxylase, found in Cupriavidus pinatubonensis (strain JMP 134 / LMG 1197) (Cupriavidus necator (strain JMP 134)).